A 681-amino-acid chain; its full sequence is MPTTANAKRKILVTSALPYANGSIHLGHLLEYIQTDIWVRFQKSRGHECHYVCADDAHGTAIMLRAEQEGITPEQLISKVSAEHQADFARFGVAFDNYYSTHSEENRQHSERIYTALRDAGHISTRDIEQMYDPVKGLFLADRFIKGTCPKCGAGDQYGDNCEACGATYTPAELIDPVSAISGATPEVRSSTHFFFKLPDFADFMQGWIDGGHVQPQIRNKLLEWFESGFNEWDISRDAPYFGFEIPDAPGKYFYVWLDAPIGYLASFQNLCEREGIDFDSYWRRDSDAEVYHFIGKDIVYFHALFWPAMLEGAGLRTPTGVNCHGFVTVNGAKMSKSRGTFIKAQTYAEYLNPEYLRYYFAAKLTAGVDDLDLNLEDFASRVNADLVGKVVNIASRCAGFVKKLGAGRLAAHCAEPELVTRFVEAGEAIAADYEAREFARAMRKVMDLADEANAYIADKAPWVLAKEEGREQEVLDICSVGINLFRILMVYLQPVVPAMAEQARDFLQIESLDWESRRTLLEDHAIAKFKPLMTRVDTDKIASMTEASKEVLAEEQKLKEQAKGPLADDPIADEIGFDDFAKLDLRIVRIAKAEYVEGAKKLLKLTLDLGGETRTVFSGIRAVYAPEALEGRLTVMVANLAPRKMRFGVSEGMVLAAGDKEGGIYLLSPDNGAEPGQRVS.

Residues 18–28 carry the 'HIGH' region motif; it reads PYANGSIHLGH. Cys149, Cys152, Cys162, and Cys165 together coordinate Zn(2+). The 'KMSKS' region signature appears at 334 to 338; sequence KMSKS. Lys337 contributes to the ATP binding site. Residues 580 to 681 form the tRNA-binding domain; sequence DFAKLDLRIV…NGAEPGQRVS (102 aa).

Belongs to the class-I aminoacyl-tRNA synthetase family. MetG type 1 subfamily. As to quaternary structure, homodimer. The cofactor is Zn(2+).

Its subcellular location is the cytoplasm. It carries out the reaction tRNA(Met) + L-methionine + ATP = L-methionyl-tRNA(Met) + AMP + diphosphate. Functionally, is required not only for elongation of protein synthesis but also for the initiation of all mRNA translation through initiator tRNA(fMet) aminoacylation. This is Methionine--tRNA ligase from Chromohalobacter salexigens (strain ATCC BAA-138 / DSM 3043 / CIP 106854 / NCIMB 13768 / 1H11).